The sequence spans 80 residues: U-actitoxin-Avd9a (80 aa).

Positions 1-20 are cleaved as a signal peptide; that stretch reads MNLKVLAVFVLCAILVVVTA. The propeptide occupies 21-39; sequence ERRGTETGVYKKDTLQDLI. The ShKT domain maps to 45–80; sequence CIDRFPTGTCKQVKKGGSCKNSDKYRMNCRKTCGLC. 3 cysteine pairs are disulfide-bonded: Cys-45/Cys-80, Cys-54/Cys-73, and Cys-63/Cys-77. The crucial for binding to potassium channels stretch occupies residues 68–69; the sequence is KY.

Belongs to the sea anemone type 1 potassium channel toxin family. Type 1b subfamily.

The protein localises to the secreted. Its subcellular location is the nematocyst. Its function is as follows. Inhibits voltage-gated potassium channels (Kv1/KCNA). In Anemonia viridis (Snakelocks anemone), this protein is U-actitoxin-Avd9a.